Consider the following 241-residue polypeptide: Orotidine 5'-phosphate decarboxylase (241 aa).

Substrate is bound by residues Asp-16, Lys-37, 64-73, Thr-128, Arg-190, Gln-199, Gly-219, and Arg-220; that span reads DLKFHDIPTT. Catalysis depends on Lys-66, which acts as the Proton donor.

The protein belongs to the OMP decarboxylase family. Type 1 subfamily. As to quaternary structure, homodimer.

The catalysed reaction is orotidine 5'-phosphate + H(+) = UMP + CO2. Its pathway is pyrimidine metabolism; UMP biosynthesis via de novo pathway; UMP from orotate: step 2/2. In terms of biological role, catalyzes the decarboxylation of orotidine 5'-monophosphate (OMP) to uridine 5'-monophosphate (UMP). The chain is Orotidine 5'-phosphate decarboxylase from Prochlorococcus marinus (strain NATL1A).